We begin with the raw amino-acid sequence, 387 residues long: Patatin-03 (387 aa).

The signal sequence occupies residues 1 to 23 (MATTKSVLVLIFMILATTSSTFA). Residues 32-230 (LSIDGGGIKG…TVADPALLSV (199 aa)) form the PNPLA domain. The short motif at 36 to 41 (GGGIKG) is the GXGXXG element. A GXSXG motif is present at residues 75–79 (GTSTG). The active-site Nucleophile is the S77. N115 and N203 each carry an N-linked (GlcNAc...) asparagine glycan. Residue D216 is the Proton acceptor of the active site. Positions 216 to 218 (DGA) match the DGA/G motif.

Belongs to the patatin family. In terms of tissue distribution, tuber.

It localises to the vacuole. Functionally, probable lipolytic acyl hydrolase (LAH), an activity which is thought to be involved in the response of tubers to pathogens. In Solanum tuberosum (Potato), this protein is Patatin-03.